We begin with the raw amino-acid sequence, 176 residues long: 3-hydroxydecanoyl-[acyl-carrier-protein] dehydratase (176 aa).

His71 is an active-site residue.

Belongs to the thioester dehydratase family. FabA subfamily. As to quaternary structure, homodimer.

It is found in the cytoplasm. It carries out the reaction a (3R)-hydroxyacyl-[ACP] = a (2E)-enoyl-[ACP] + H2O. The catalysed reaction is (3R)-hydroxydecanoyl-[ACP] = (2E)-decenoyl-[ACP] + H2O. It catalyses the reaction (2E)-decenoyl-[ACP] = (3Z)-decenoyl-[ACP]. It participates in lipid metabolism; fatty acid biosynthesis. In terms of biological role, necessary for the introduction of cis unsaturation into fatty acids. Catalyzes the dehydration of (3R)-3-hydroxydecanoyl-ACP to E-(2)-decenoyl-ACP and then its isomerization to Z-(3)-decenoyl-ACP. Can catalyze the dehydratase reaction for beta-hydroxyacyl-ACPs with saturated chain lengths up to 16:0, being most active on intermediate chain length. The protein is 3-hydroxydecanoyl-[acyl-carrier-protein] dehydratase of Afipia carboxidovorans (strain ATCC 49405 / DSM 1227 / KCTC 32145 / OM5) (Oligotropha carboxidovorans).